We begin with the raw amino-acid sequence, 558 residues long: Cytochrome P450 monooxygenase grgG (558 aa).

A helical transmembrane segment spans residues 11–31 (PASFIYFPLLILVGHALIFIL). Cys-470 contacts heme.

This sequence belongs to the cytochrome P450 family. Heme serves as cofactor.

Its subcellular location is the membrane. It participates in secondary metabolite biosynthesis. Cytochrome P450 monooxygenase; part of the gene cluster that mediates the biosynthesis of gregatin A, a fungal polyketide featuring an alkylated furanone core. The PKS grgA synthesizes C11 and C4 polyketide chains in the presence and absence of the trans-enoyl reductase grgB, respectively. The polyketide transferase grgF is then responsible for the fusion of the two carbon chains to produce the furanone skeleton of gregatin A. Next, the cytochrome P450 monooxygenase grgG performs the oxidative cyclization to furnish the gregatin scaffold and leads to the formation of desmethylgregatin A. In this transformation, grgG initially abstracts a hydrogen atom from C-8 to generate a substrate radical, from which one electron is transferred to the iron-heme center to yield a carbocationic species. Heterocyclization along with double-bond isomerizations provides desmethylgregatin A with the furanone ring. Alternatively, grgG might provide hydroxylation at the C-8 radical, which is followed by dehydration to give the cyclized desmethylgregatin A. Finally, the O-methyltransferase grgD methylates the carboxyl group of desmethylgregatin A to provide gregatin A. This chain is Cytochrome P450 monooxygenase grgG (grgG), found in Penicillium sp.